Reading from the N-terminus, the 784-residue chain is Toll-like receptor 2 (784 aa).

The N-terminal stretch at 1-24 (MLHVLWTFWILVAMTDLSRKGCSA) is a signal peptide. Residues 25–588 (QASLSCDAAG…RPSVLECHQT (564 aa)) are Extracellular-facing. Cysteines 30 and 36 form a disulfide. LRR repeat units lie at residues 54 to 77 (MKSLDLSNNKITSIGHGDLRGCVN), 78 to 101 (LRALILQSSGINTIEEDAFSSLSK), 102 to 125 (LEYLDLSDNHLSNLSSSWFRPLSS), 126 to 150 (LKYLNLLGNPYRILGETPLFLNLTH), 151 to 175 (LQTLRVGNVATFSGIRRTDFAGLTS), 176 to 199 (LDELEIKALSLQNYEPGSLQSIQS), 200 to 223 (IHHLTFHLSQSDFLLGVFEDTLSS), 224 to 250 (VGYLELRDANLDSFYFSELSTDEMNSP), 251 to 278 (MKKLAFQNADLTDESFNELLKLLRYTPE), 279 to 308 (LLEVEFDDCTLNGVGDFQPSESDVVRELGK), 309 to 337 (VETLIIRRLHIPRFYSFYDLSTVYTLLEK), 338 to 361 (VKRITVENSKVFLVPCLFSQHLKS), 362 to 388 (LEFLDLSENLMVEEYLKNAACEGSWPS), 389 to 414 (LQTLILRQNRLKSIERTGKILLTLKN), 415 to 437 (LTALDISRNSFQSMPDSCQWPGK), 438 to 457 (MRFLNLSSTGIQAVKMCIPQ), 458 to 478 (TLEVLDVSNNNLISFSLFLPL), 479 to 500 (LRELYISRNKLHTLPDASLFPV), and 501 to 524 (LLVMKIRENAISTFSKDQLSSFPK). N-linked (GlcNAc...) asparagine glycans are attached at residues N114 and N147. C353 and C382 are oxidised to a cystine. N414 is a glycosylation site (N-linked (GlcNAc...) asparagine). Cysteines 432 and 454 form a disulfide. N-linked (GlcNAc...) asparagine glycosylation is present at N442. In terms of domain architecture, LRRCT spans 525–579 (LVSLEAGGNHFICSCELLSFTLEHPALVQVLAGWPDSYLCDSPSRLRGQRVQDAR). A helical transmembrane segment spans residues 589–609 (LLVSGVCCALVLLILLIGGLC). Topologically, residues 610–784 (HHFHGLWYLR…WVNLRTAIKS (175 aa)) are cytoplasmic. The region spanning 639 to 782 (ICYDAFVSYS…VFWVNLRTAI (144 aa)) is the TIR domain. Residue K754 forms a Glycyl lysine isopeptide (Lys-Gly) (interchain with G-Cter in ubiquitin) linkage. The ATG16L1-binding motif signature appears at 761–778 (YLEWPLDEGQQEVFWVNL).

It belongs to the Toll-like receptor family. As to quaternary structure, interacts with LY96, TLR1 and TLR6 (via extracellular domain). TLR2 seems to exist in heterodimers with either TLR1 or TLR6 before stimulation by the ligand. The heterodimers form bigger oligomers in response to their corresponding ligands as well as further heterotypic associations with other receptors such as CD14 and/or CD36. Binds MYD88 (via TIR domain). Interacts with TICAM1. Interacts with CNPY3. Interacts with ATG16L1. Interacts with PPP1R11. Interacts with TICAM2. Interacts with TIRAP. Ubiquitinated at Lys-754 by PPP1R11, leading to its degradation. Deubiquitinated by USP2. In terms of processing, glycosylation of Asn-442 is critical for secretion of the N-terminal ectodomain of TLR2.

The protein localises to the membrane. Its subcellular location is the cytoplasmic vesicle. It is found in the phagosome membrane. It localises to the membrane raft. In terms of biological role, cooperates with LY96 to mediate the innate immune response to bacterial lipoproteins and other microbial cell wall components. Cooperates with TLR1 or TLR6 to mediate the innate immune response to bacterial lipoproteins or lipopeptides. Acts via MYD88 and TRAF6, leading to NF-kappa-B activation, cytokine secretion and the inflammatory response. May also promote apoptosis in response to lipoproteins. Forms activation clusters composed of several receptors depending on the ligand, these clusters trigger signaling from the cell surface and subsequently are targeted to the Golgi in a lipid-raft dependent pathway. Forms the cluster TLR2:TLR6:CD14:CD36 in response to diacylated lipopeptides and TLR2:TLR1:CD14 in response to triacylated lipopeptides. The protein is Toll-like receptor 2 (TLR2) of Cricetulus griseus (Chinese hamster).